The following is a 402-amino-acid chain: MATIDLDGPALAPPKGEVSNLDDPPNQNCLAYTVLILCAVITTICFLLRAYGRVYLLKKFQTEEILTTLAYGNYWGAAYATFKMVDTPGYFVHQWNVRLKDVIPTNYWILIFGVCYSFVLPFLKIAILVEWCRLFVPKGTRTKSIFWWGCMVIGFVQATSNTAIVVALNMQCNPHEAIWDFRIPGAKCWDLHKLQVASATIHLCCDIAIFLLPQQVIWKLKMSWKKRMGVSVIFGLGLLACVSAAVRLAVTVKYGKAADALYALAPLVFWATAEMTCGFFIVCVPCIPKILKETGVIRNIKRAFGMSTAPTNPNTADRYAKSGTKGSQLSSTGPKSYYKLDEDGVPLGTLKGSESTEYLRGNVNNGQGITRTTQIKITQDNRSTSDSEGHAAFPASQKPWGV.

The next 5 helical transmembrane spans lie at 28 to 48 (NCLA…CFLL), 109 to 129 (ILIF…AILV), 145 to 165 (IFWW…TAIV), 232 to 252 (VIFG…AVTV), and 264 to 284 (LAPL…IVCV). Disordered stretches follow at residues 312-335 (NPNT…TGPK) and 378-402 (TQDN…PWGV). Residues 324–334 (TKGSQLSSTGP) show a composition bias toward polar residues. An N-linked (GlcNAc...) asparagine glycan is attached at asparagine 381.

Belongs to the SAT4 family.

It localises to the membrane. It functions in the pathway secondary metabolite biosynthesis. Its function is as follows. Part of the gene cluster that mediates the biosynthesis of the tetraketides fugralins such as linear fugralin A and cyclic fugralin B, volatile compounds that play a role in the asexual reproductive cycle but are not involved in pathogenicity. One of the key features of fugralins is the presence of a double methyl group, which is only rarely encountered in fungal secondary metabolites. As the fugralins cluster does not contain an independent methyltransferase, the PKS FGR1 is probably responsible for adding two methyl groups to the same carbon atom. Fugralin B is similar to fugralin A except for a cyclization between the carboxylic acid C-8 and the alcohol on C-4 resulting in a six membered lactone ring, probably catalyzed by the cyclase FGR4. The exact role of the individual cluster genes remains unknown and further work is needed to unravel the biosynthetic pathway. The sequence is that of Fugralins biosynthesis cluster protein 2 from Gibberella zeae (strain ATCC MYA-4620 / CBS 123657 / FGSC 9075 / NRRL 31084 / PH-1) (Wheat head blight fungus).